The primary structure comprises 455 residues: MIPSTAAALLTLTAGAAFAHTGCGGHEIGRRNVGGPMLYRRAVTDEASAAVSTDINTECTAYSYAPVTELISSFPTIWQTASIPSNDTEAQQLFGKINSTLNTKIPNDVPHGTPTGDWTGVNYSNSDPDCWWTHNKCTTPSNDTGLQADISIAPEPMTWGLGFDDGPNCSHNALYDLLLENNQKATMFFIGSNVLDWPLQAMRAHDEGHEICVHTWSHQYMTALSNEVVFAELYYTQKAIKAVLGVTPQCWRPPYGDVDNRVRMIAEGLNLTTIIWSDDTDDWAAGTNGVTEQDVTNNYQSVIDKAGNGTYTTHGPVVLNHELTNYTMSVFMTMFPKIKSAFNYIVPICTAYNITQPYAESNITCPNFETYISGVTNISSSTTQKDGSSSTNTASGSGAAGSASATSSSDDSSSSGGSSGSSGSNNASSGALGMFDSLSGVGLILGGVVAGVMLL.

The signal sequence occupies residues 1–19 (MIPSTAAALLTLTAGAAFA). N-linked (GlcNAc...) asparagine glycans are attached at residues Asn86, Asn98, Asn122, and Asn142. In terms of domain architecture, NodB homology spans 157–347 (MTWGLGFDDG…IKSAFNYIVP (191 aa)). The active-site Proton acceptor is Asp164. Position 164 (Asp164) interacts with acetate. Position 165 (Asp165) interacts with Co(2+). Residue Asn168 is glycosylated (N-linked (GlcNAc...) asparagine). Residues His214 and His218 each coordinate Co(2+). Residue Tyr255 participates in acetate binding. N-linked (GlcNAc...) asparagine glycosylation is found at Asn270 and Asn308. His321 functions as the Proton donor in the catalytic mechanism. N-linked (GlcNAc...) asparagine glycosylation is found at Asn325, Asn353, Asn362, and Asn377. Residues 381-423 (STTQKDGSSSTNTASGSGAAGSASATSSSDDSSSSGGSSGSSG) are disordered. N-linked (GlcNAc...) asparagine glycosylation occurs at Asn426. The GPI-anchor amidated serine moiety is linked to residue Ser429. Residues 430 to 455 (GALGMFDSLSGVGLILGGVVAGVMLL) constitute a propeptide, removed in mature form.

The protein belongs to the polysaccharide deacetylase family. It depends on Co(2+) as a cofactor. Post-translationally, the GPI anchor is required for the attachment to the cell membrane but not for cell surface targeting.

It localises to the secreted. The protein resides in the cell wall. Its subcellular location is the cell membrane. It catalyses the reaction [(1-&gt;4)-N-acetyl-beta-D-glucosaminyl](n) + n H2O = chitosan + n acetate. Hydrolyzes the N-acetamido groups of N-acetyl-D-glucosamine residues in chitin to form chitosan and acetate. Chitosan is required to anchor melanin to the cell wall, for maintenance of cell wall integrity, and for proper cytokinesis. Chitosan offers an advantage during infection as it is less readily detected than chitin by host immunosurveillance mechanisms. In Cryptococcus neoformans var. grubii serotype A (strain H99 / ATCC 208821 / CBS 10515 / FGSC 9487) (Filobasidiella neoformans var. grubii), this protein is Chitin deacetylase 2.